Consider the following 340-residue polypeptide: Phosphoribosylformylglycinamidine cyclo-ligase (340 aa).

Belongs to the AIR synthase family.

It localises to the cytoplasm. The catalysed reaction is 2-formamido-N(1)-(5-O-phospho-beta-D-ribosyl)acetamidine + ATP = 5-amino-1-(5-phospho-beta-D-ribosyl)imidazole + ADP + phosphate + H(+). It participates in purine metabolism; IMP biosynthesis via de novo pathway; 5-amino-1-(5-phospho-D-ribosyl)imidazole from N(2)-formyl-N(1)-(5-phospho-D-ribosyl)glycinamide: step 2/2. This chain is Phosphoribosylformylglycinamidine cyclo-ligase, found in Acetivibrio thermocellus (strain ATCC 27405 / DSM 1237 / JCM 9322 / NBRC 103400 / NCIMB 10682 / NRRL B-4536 / VPI 7372) (Clostridium thermocellum).